The primary structure comprises 377 residues: Subtilisin-like protease CPC735_012930 (377 aa).

The first 20 residues, 1–20 (MSILFKIFASTLAVVSVVNA), serve as a signal peptide directing secretion. A propeptide spanning residues 21-118 (GELLNFENER…VEPDRMASAT (98 aa)) is cleaved from the precursor. Positions 36-114 (SYIVVMKDGT…HVKYVEPDRM (79 aa)) constitute an Inhibitor I9 domain. The Peptidase S8 domain occupies 128–377 (SWGLGRISHT…NKLLYNKSGF (250 aa)). Catalysis depends on charge relay system residues aspartate 160 and histidine 191. An N-linked (GlcNAc...) asparagine glycan is attached at asparagine 252. Serine 323 acts as the Charge relay system in catalysis. 2 N-linked (GlcNAc...) asparagine glycosylation sites follow: asparagine 364 and asparagine 373.

This sequence belongs to the peptidase S8 family.

Its subcellular location is the secreted. Secreted subtilisin-like serine protease with keratinolytic activity that contributes to pathogenicity. This Coccidioides posadasii (strain C735) (Valley fever fungus) protein is Subtilisin-like protease CPC735_012930.